We begin with the raw amino-acid sequence, 120 residues long: Large ribosomal subunit protein uL18 (120 aa).

The protein belongs to the universal ribosomal protein uL18 family. Part of the 50S ribosomal subunit; part of the 5S rRNA/L5/L18/L25 subcomplex. Contacts the 5S and 23S rRNAs.

Its function is as follows. This is one of the proteins that bind and probably mediate the attachment of the 5S RNA into the large ribosomal subunit, where it forms part of the central protuberance. The protein is Large ribosomal subunit protein uL18 of Bacillus cereus (strain G9842).